The primary structure comprises 156 residues: Putative pre-16S rRNA nuclease (156 aa).

This sequence belongs to the YqgF nuclease family.

It localises to the cytoplasm. Functionally, could be a nuclease involved in processing of the 5'-end of pre-16S rRNA. In Phenylobacterium zucineum (strain HLK1), this protein is Putative pre-16S rRNA nuclease.